The primary structure comprises 1315 residues: Myopalladin (1315 aa).

4 disordered regions span residues 19 to 60 (SYLA…DLPD), 81 to 145 (INHD…TQSK), 166 to 204 (HSSKRIRPRACKNHKSKTESQNKVLQENSPTFSDLTERR), and 230 to 266 (EAKRREAELAAGEAAAGDSTPGSSPSSLYYEEPLGQP). Basic and acidic residues-rich tracts occupy residues 23 to 35 (ETRHRGDNERSRA) and 84 to 104 (DPLERVDEAQARKRLSSDQTK). A phosphoserine mark is found at serine 99 and serine 129. Residues 166 to 180 (HSSKRIRPRACKNHK) are compositionally biased toward basic residues. The segment covering 184–199 (ESQNKVLQENSPTFSD) has biased composition (polar residues). The stretch at 219–240 (DNELNHAIEQREAKRREAELAA) forms a coiled coil. A Phosphothreonine modification is found at threonine 249. Residues 267 to 357 (PRFTQKLRSR…DSTSAEIYIE (91 aa)) enclose the Ig-like 1 domain. The cysteines at positions 288 and 339 are disulfide-linked. The disordered stretch occupies residues 359–392 (VSSSDSEGDPNKEEMNRIQKPNEVSSPPTTSAAI). The 97-residue stretch at 432-528 (PVFTKMLQNL…GTVSSIAQLD (97 aa)) folds into the Ig-like 2 domain. Cysteine 453 and cysteine 512 are oxidised to a cystine. Disordered regions lie at residues 535 to 652 (ISDN…VLAK), 674 to 704 (LQNTSPSSPKESLHMSALNSAPPAVTISSKQ), and 725 to 747 (SSTSTATVSPSSSPVFTLSNTPQ). Positions 609-623 (SSGSGAANTSQTRPN) are enriched in polar residues. Residue serine 641 is modified to Phosphoserine. The span at 725–741 (SSTSTATVSPSSSPVFT) shows a compositional bias: low complexity. Position 754 is a phosphoserine (serine 754). Disordered stretches follow at residues 762–814 (HPST…TPVS) and 840–865 (NAMGLPKSAPSVPSQGLMKKTTKAPQ). A compositionally biased stretch (pro residues) spans 779-790 (PAPPSPAEPAAP). Phosphoserine is present on residues serine 809 and serine 814. 2 positions are modified to phosphoserine: serine 903 and serine 924. Ig-like domains follow at residues 941-1025 (PIFD…GRIS), 1068-1157 (PHFL…LELT), and 1167-1257 (PVIL…ARLD). Cysteine 1089 and cysteine 1141 are joined by a disulfide.

This sequence belongs to the myotilin/palladin family. As to quaternary structure, interacts with TTN/titin, NEB, NEBL, ACTN2 and CARP.

Its subcellular location is the cytoplasm. The protein resides in the nucleus. The protein localises to the myofibril. It localises to the sarcomere. It is found in the z line. Its function is as follows. Component of the sarcomere that tethers together nebulin (skeletal muscle) and nebulette (cardiac muscle) to alpha-actinin, at the Z lines. In Mus musculus (Mouse), this protein is Myopalladin (Mypn).